Consider the following 151-residue polypeptide: Putative pre-16S rRNA nuclease (151 aa).

Belongs to the YqgF nuclease family.

The protein localises to the cytoplasm. Functionally, could be a nuclease involved in processing of the 5'-end of pre-16S rRNA. This Gloeothece citriformis (strain PCC 7424) (Cyanothece sp. (strain PCC 7424)) protein is Putative pre-16S rRNA nuclease.